A 369-amino-acid chain; its full sequence is Maltose/maltodextrin import ATP-binding protein MalK (369 aa).

The ABC transporter domain occupies 4–234 (VTLRNVCKSY…PKNRFVAGFI (231 aa)). Residue 36-43 (GPSGCGKS) coordinates ATP.

The protein belongs to the ABC transporter superfamily. Maltooligosaccharide importer (TC 3.A.1.1.1) family. As to quaternary structure, the complex is composed of two ATP-binding proteins (MalK), two transmembrane proteins (MalG and MalK) and a solute-binding protein (MalE).

The protein resides in the cell inner membrane. The enzyme catalyses D-maltose(out) + ATP + H2O = D-maltose(in) + ADP + phosphate + H(+). Part of the ABC transporter complex MalEFGK involved in maltose/maltodextrin import. Responsible for energy coupling to the transport system. This is Maltose/maltodextrin import ATP-binding protein MalK from Aliivibrio fischeri (strain ATCC 700601 / ES114) (Vibrio fischeri).